Consider the following 191-residue polypeptide: Small ribosomal subunit protein uS5 (191 aa).

Residues 1-21 form a disordered region; it reads MAAERERGGRERSREREERDS. The 64-residue stretch at 23-86 folds into the S5 DRBM domain; that stretch reads FVDKLVHINR…ESAKRNLTRV (64 aa).

In terms of assembly, part of the 30S ribosomal subunit. Contacts proteins S4 and S8.

Functionally, with S4 and S12 plays an important role in translational accuracy. In terms of biological role, located at the back of the 30S subunit body where it stabilizes the conformation of the head with respect to the body. The sequence is that of Small ribosomal subunit protein uS5 from Rhodopseudomonas palustris (strain ATCC BAA-98 / CGA009).